Consider the following 149-residue polypeptide: Calmodulin (149 aa).

N-acetylalanine is present on alanine 2. 4 consecutive EF-hand domains span residues glutamate 8–asparagine 43, proline 44–aspartate 79, aspartate 81–lysine 116, and leucine 117–lysine 149. Ca(2+)-binding residues include aspartate 21, aspartate 23, aspartate 25, cysteine 27, glutamate 32, aspartate 57, aspartate 59, asparagine 61, threonine 63, glutamate 68, aspartate 94, aspartate 96, asparagine 98, and glutamate 105. At lysine 116 the chain carries N6,N6,N6-trimethyllysine. Residues aspartate 130, aspartate 132, aspartate 134, glutamine 136, and glutamate 141 each contribute to the Ca(2+) site.

Belongs to the calmodulin family.

Its function is as follows. Calmodulin mediates the control of a large number of enzymes, ion channels and other proteins by Ca(2+). Among the enzymes to be stimulated by the calmodulin-Ca(2+) complex are a number of protein kinases and phosphatases. This Zea mays (Maize) protein is Calmodulin (CALM1).